The primary structure comprises 335 residues: Fructose-1,6-bisphosphatase class 1 (335 aa).

Mg(2+)-binding residues include E90, D113, L115, and D116. Substrate contacts are provided by residues D116 to S119, N209, Y242, and K272. E278 contributes to the Mg(2+) binding site.

The protein belongs to the FBPase class 1 family. In terms of assembly, homotetramer. The cofactor is Mg(2+).

The protein localises to the cytoplasm. The enzyme catalyses beta-D-fructose 1,6-bisphosphate + H2O = beta-D-fructose 6-phosphate + phosphate. It participates in carbohydrate biosynthesis; gluconeogenesis. This chain is Fructose-1,6-bisphosphatase class 1, found in Histophilus somni (strain 2336) (Haemophilus somnus).